The chain runs to 1375 residues: DNA-directed RNA polymerase subunit beta' (1375 aa).

Positions 1–158 (MAKNEVLSLP…RVNKIIQPIR (158 aa)) are unknown. The DNA-directed RNA polymerase subunit beta' stretch occupies residues 159–1353 (KTYGSKAFTH…GGLIPAGTGI (1195 aa)). Residues Cys-219, Cys-221, Cys-233, and Cys-236 each contribute to the Zn(2+) site. Asp-607, Asp-609, and Asp-611 together coordinate Mg(2+).

It belongs to the RNA polymerase beta' chain family. As to quaternary structure, the RNAP catalytic core consists of 2 alpha, 1 beta, 1 beta' and 1 omega subunit. When a sigma factor is associated with the core the holoenzyme is formed, which can initiate transcription. It depends on Mg(2+) as a cofactor. Zn(2+) serves as cofactor.

The enzyme catalyses RNA(n) + a ribonucleoside 5'-triphosphate = RNA(n+1) + diphosphate. Its function is as follows. DNA-dependent RNA polymerase catalyzes the transcription of DNA into RNA using the four ribonucleoside triphosphates as substrates. This Acholeplasma laidlawii (strain PG-8A) protein is DNA-directed RNA polymerase subunit beta'.